Reading from the N-terminus, the 88-residue chain is UPF0297 protein BT9727_4120 (88 aa).

Belongs to the UPF0297 family.

The sequence is that of UPF0297 protein BT9727_4120 from Bacillus thuringiensis subsp. konkukian (strain 97-27).